Consider the following 588-residue polypeptide: MSKRTTYCGLVTEAFLGQEITLKGWVNNRRDLGGLIFVDLRDREGIVQVVFNPAFSEEALKIAETVRSEYVVEVQGTVTKRDPETVNPKIKTGQVEVQVTNIKVINKSETPPFSINEENVNVDENIRLKYRYLDLRRQELAQTFKMRHQITRSIRQYLDDEGFFDIETPVLTKSTPEGARDYLVPSRVHDGEFYALPQSPQLFKQLLMISGFDKYYQIVKCFRDEDLRADRQPEFTQVDIEMSFVDQEDVMQMGEEMLKKVVKEVKGVEINGAFPRMTYKEAMRRYGSDKPDTRFEMELIDVSQLGRDMDFKVFKDTVENDGEIKAIVAKGAAEQYTRKDMDALTEFVNIYGAKGLAWVKVVEDGLTGPIGRFFETENVETLLTLTGAEAGDLVMFVADKPNVVAQSLGALRVKLAKELGLIDETKLNFLWVTDWPLLEYDEDAKRYVAAHHPFTSPKEADIAKLGTAPEEAEANAYDIVLNGYELGGGSIRIHDGELQEKMFEVLGFTKEQAQEQFGFLLDAFKYGAPPHGGIALGLDRLVMLLTNRTNLRDTIAFPKTASATCLLTNAPSEVSDKQLEELSLRIRH.

Residue Glu-177 participates in L-aspartate binding. The interval 201 to 204 (QLFK) is aspartate. Arg-223 contributes to the L-aspartate binding site. ATP contacts are provided by residues 223-225 (RDE) and Gln-232. Position 451 (His-451) interacts with L-aspartate. Glu-485 serves as a coordination point for ATP. Arg-492 contributes to the L-aspartate binding site. 537 to 540 (GLDR) provides a ligand contact to ATP.

It belongs to the class-II aminoacyl-tRNA synthetase family. Type 1 subfamily. In terms of assembly, homodimer.

The protein resides in the cytoplasm. It carries out the reaction tRNA(Asp) + L-aspartate + ATP = L-aspartyl-tRNA(Asp) + AMP + diphosphate. Its function is as follows. Catalyzes the attachment of L-aspartate to tRNA(Asp) in a two-step reaction: L-aspartate is first activated by ATP to form Asp-AMP and then transferred to the acceptor end of tRNA(Asp). The sequence is that of Aspartate--tRNA ligase from Staphylococcus aureus (strain NCTC 8325 / PS 47).